The sequence spans 420 residues: Glutamate-1-semialdehyde 2,1-aminomutase (420 aa).

K259 is modified (N6-(pyridoxal phosphate)lysine).

It belongs to the class-III pyridoxal-phosphate-dependent aminotransferase family. HemL subfamily. Pyridoxal 5'-phosphate is required as a cofactor.

Its subcellular location is the cytoplasm. It carries out the reaction (S)-4-amino-5-oxopentanoate = 5-aminolevulinate. Its pathway is porphyrin-containing compound metabolism; protoporphyrin-IX biosynthesis; 5-aminolevulinate from L-glutamyl-tRNA(Glu): step 2/2. In Methanothermobacter thermautotrophicus (strain ATCC 29096 / DSM 1053 / JCM 10044 / NBRC 100330 / Delta H) (Methanobacterium thermoautotrophicum), this protein is Glutamate-1-semialdehyde 2,1-aminomutase (hemL).